A 350-amino-acid polypeptide reads, in one-letter code: Putative zinc metalloprotease jhp_0242 (350 aa).

Residue H16 coordinates Zn(2+). E17 is an active-site residue. Zn(2+) is bound at residue H20. 5 helical membrane-spanning segments follow: residues 43–63 (WFFK…GGYV), 94–114 (LWIL…VYFF), 249–269 (LIMG…VGAL), 277–297 (MLLL…LLPI), and 326–346 (LWLV…FNDI). In terms of domain architecture, PDZ spans 108–177 (AVLVYFFLAL…GELILEIERN (70 aa)).

This sequence belongs to the peptidase M50B family. Zn(2+) is required as a cofactor.

Its subcellular location is the cell inner membrane. The chain is Putative zinc metalloprotease jhp_0242 from Helicobacter pylori (strain J99 / ATCC 700824) (Campylobacter pylori J99).